A 440-amino-acid chain; its full sequence is tRNA-2-methylthio-N(6)-dimethylallyladenosine synthase (440 aa).

An MTTase N-terminal domain is found at 2–117 (KGLYIKTYGC…LPELIVKASR (116 aa)). 6 residues coordinate [4Fe-4S] cluster: Cys11, Cys47, Cys80, Cys157, Cys161, and Cys164. The region spanning 143–374 (NSQGSSAFLA…QELISKQQLE (232 aa)) is the Radical SAM core domain. The TRAM domain occupies 377-440 (QSMIGKTIPV…RQNSLLGCAA (64 aa)).

The protein belongs to the methylthiotransferase family. MiaB subfamily. In terms of assembly, monomer. It depends on [4Fe-4S] cluster as a cofactor.

The protein resides in the cytoplasm. The enzyme catalyses N(6)-dimethylallyladenosine(37) in tRNA + (sulfur carrier)-SH + AH2 + 2 S-adenosyl-L-methionine = 2-methylsulfanyl-N(6)-dimethylallyladenosine(37) in tRNA + (sulfur carrier)-H + 5'-deoxyadenosine + L-methionine + A + S-adenosyl-L-homocysteine + 2 H(+). In terms of biological role, catalyzes the methylthiolation of N6-(dimethylallyl)adenosine (i(6)A), leading to the formation of 2-methylthio-N6-(dimethylallyl)adenosine (ms(2)i(6)A) at position 37 in tRNAs that read codons beginning with uridine. The chain is tRNA-2-methylthio-N(6)-dimethylallyladenosine synthase from Wolbachia pipientis subsp. Culex pipiens (strain wPip).